The sequence spans 354 residues: Macrosialin (354 aa).

The N-terminal stretch at methionine 1 to glycine 21 is a signal peptide. Topologically, residues asparagine 22 to serine 319 are extracellular. The tract at residues aspartate 23–proline 140 is mucin-like. The span at proline 40–histidine 51 shows a compositional bias: low complexity. The tract at residues proline 40–tryptophan 162 is disordered. Residues arginine 52–threonine 61 are compositionally biased toward basic residues. The span at histidine 62 to threonine 84 shows a compositional bias: low complexity. 2 repeat units span residues threonine 70–alanine 99 and threonine 100–alanine 129. The tract at residues threonine 70–alanine 129 is 2 X 30 AA tandem repeats. Polar residues predominate over residues serine 85–glutamine 102. Residues asparagine 88 and asparagine 96 are each glycosylated (N-linked (GlcNAc...) asparagine). Positions glycine 103–glycine 117 are enriched in low complexity. Residues asparagine 118 and asparagine 126 are each glycosylated (N-linked (GlcNAc...) asparagine). Positions valine 121–threonine 135 are enriched in polar residues. Residues proline 140–serine 150 are compositionally biased toward pro residues. N-linked (GlcNAc...) asparagine glycosylation is found at asparagine 164, asparagine 199, asparagine 246, asparagine 261, and asparagine 279. A disulfide bond links cysteine 169 and cysteine 207. An intrachain disulfide couples cysteine 277 to cysteine 314. A helical transmembrane segment spans residues isoleucine 320–isoleucine 344. The Cytoplasmic segment spans residues arginine 345–leucine 354.

Belongs to the LAMP family. N- and O-glycosylated. Highly expressed by blood monocytes and tissue macrophages. Also expressed in lymphocytes, fibroblasts and endothelial cells. Expressed in many tumor cell lines which could allow them to attach to selectins on vascular endothelium, facilitating their dissemination to secondary sites.

It localises to the cell membrane. It is found in the endosome membrane. The protein localises to the lysosome membrane. In terms of biological role, could play a role in phagocytic activities of tissue macrophages, both in intracellular lysosomal metabolism and extracellular cell-cell and cell-pathogen interactions. Binds to tissue- and organ-specific lectins or selectins, allowing homing of macrophage subsets to particular sites. Rapid recirculation of CD68 from endosomes and lysosomes to the plasma membrane may allow macrophages to crawl over selectin-bearing substrates or other cells. The protein is Macrosialin (CD68) of Homo sapiens (Human).